Consider the following 271-residue polypeptide: Transcription factor PU.1 (271 aa).

The interval 124–164 (LSPAHQQSSDEEEGERQSPPLEVSDGEADGLEPGPGLLHGE) is disordered. 2 positions are modified to phosphoserine: Ser141 and Ser147. Positions 154–164 (LEPGPGLLHGE) are enriched in low complexity. The segment at residues 171-254 (IRLYQFLLDL…VKKKLTYQFS (84 aa)) is a DNA-binding region (ETS). 4 residues coordinate DNA: Lys218, Arg231, Arg234, and Lys244.

The protein belongs to the ETS family. As to quaternary structure, binds DNA as a monomer. Can form homomers. Directly interacts with CEBPD/NF-IL6-beta; this interaction does not affect DNA-binding properties of each partner. Interacts with NONO/p54(nrb). Interacts with RUNX1/AML1. Interacts with GFI1; the interaction represses SPI1 transcriptional activity, hence blocks SPI1-induced macrophage differentiation of myeloid progenitor cells. Interacts with CEBPE. Interacts with IRF4/Pip and IRF8. Interacts with JUN. Interacts with RB1. Interacts with TBP.

It localises to the nucleus. Transcriptional activity at macrophage-specific genes is inhibited by interaction with GFI1, which results in the inhibition of SPI1-induced macrophage differentiation of myeloid progenitor cells, but not that of the granulocyte lineage. Functionally, pioneer transcription factor, which controls hematopoietic cell fate by decompacting stem cell heterochromatin and allowing other transcription factors to enter otherwise inaccessible genomic sites. Once in open chromatin, can directly control gene expression by binding genetic regulatory elements and can also more broadly influence transcription by recruiting transcription factors, such as interferon regulatory factors (IRFs), to otherwise inaccessible genomic regions. Transcriptionally activates genes important for myeloid and lymphoid lineages, such as CSF1R or FCER1A. Transcriptional activation from certain promoters, possibly containing low affinity binding sites, is achieved cooperatively with other transcription factors. FCER1A transactivation is achieved in cooperation with GATA1. May be particularly important for the pro- to pre-B cell transition. Binds (via the ETS domain) onto the purine-rich DNA core sequence 5'-GAGGAA-3', also known as the PU-box. In vitro can bind RNA and interfere with pre-mRNA splicing. The chain is Transcription factor PU.1 (Spi1) from Rattus norvegicus (Rat).